A 530-amino-acid chain; its full sequence is Phosphoenolpyruvate carboxykinase (ATP) (530 aa).

The substrate site is built by Arg58, Tyr195, and Lys201. ATP contacts are provided by residues Lys201, His220, and 236 to 244; that span reads GLSGTGKTT. The Mn(2+) site is built by Lys201 and His220. Asp257 is a binding site for Mn(2+). Residues Glu285, Arg321, 440-441, and Thr446 contribute to the ATP site; that span reads RI. Residue Arg321 coordinates substrate.

Belongs to the phosphoenolpyruvate carboxykinase (ATP) family. Mn(2+) is required as a cofactor.

The protein resides in the cytoplasm. It catalyses the reaction oxaloacetate + ATP = phosphoenolpyruvate + ADP + CO2. It functions in the pathway carbohydrate biosynthesis; gluconeogenesis. Functionally, involved in the gluconeogenesis. Catalyzes the conversion of oxaloacetate (OAA) to phosphoenolpyruvate (PEP) through direct phosphoryl transfer between the nucleoside triphosphate and OAA. In Staphylococcus aureus (strain Mu3 / ATCC 700698), this protein is Phosphoenolpyruvate carboxykinase (ATP).